The chain runs to 146 residues: Acidic phospholipase A2 S8-51 (146 aa).

A signal peptide spans 1–19; that stretch reads MYPAHLLVLLAVCVSLLGA. The propeptide occupies 20 to 27; sequence ASIPPQPL. Disulfide bonds link Cys-38-Cys-98, Cys-54-Cys-145, Cys-56-Cys-72, Cys-71-Cys-126, Cys-78-Cys-119, Cys-87-Cys-112, and Cys-105-Cys-117. 3 residues coordinate Ca(2+): Tyr-55, Gly-57, and Gly-59. Residue His-75 is part of the active site. Asp-76 serves as a coordination point for Ca(2+). Asp-120 is an active-site residue.

This sequence belongs to the phospholipase A2 family. Group I subfamily. D49 sub-subfamily. The cofactor is Ca(2+). In terms of tissue distribution, expressed by the venom gland.

It localises to the secreted. It carries out the reaction a 1,2-diacyl-sn-glycero-3-phosphocholine + H2O = a 1-acyl-sn-glycero-3-phosphocholine + a fatty acid + H(+). Functionally, snake venom phospholipase A2 (PLA2) that inhibits collagen-induced platelet aggregation. PLA2 catalyzes the calcium-dependent hydrolysis of the 2-acyl groups in 3-sn-phosphoglycerides. The sequence is that of Acidic phospholipase A2 S8-51 from Austrelaps superbus (Lowland copperhead snake).